Here is a 233-residue protein sequence, read N- to C-terminus: Tetrahydromethanopterin S-methyltransferase subunit D (233 aa).

6 helical membrane passes run 4–24 (LLLIGAITAGGVLIGGGVHFV), 39–59 (VGTGTAMLAAGAGLTGLITAA), 67–87 (LMIMAAGAVGSMLMIGITMLV), 133–153 (FVSGIIGGALGGIGGGLIYWA), 166–186 (MGAAGVAAIFAVGIFFINAVI), and 209–229 (GIVACLIASIVAGALSTLLVY).

This sequence belongs to the MtrD family. The complex is composed of 8 subunits; MtrA, MtrB, MtrC, MtrD, MtrE, MtrF, MtrG and MtrH.

It is found in the cell membrane. It catalyses the reaction 5-methyl-5,6,7,8-tetrahydromethanopterin + coenzyme M + 2 Na(+)(in) = 5,6,7,8-tetrahydromethanopterin + methyl-coenzyme M + 2 Na(+)(out). Its pathway is one-carbon metabolism; methanogenesis from CO(2); methyl-coenzyme M from 5,10-methylene-5,6,7,8-tetrahydromethanopterin: step 2/2. Part of a complex that catalyzes the formation of methyl-coenzyme M and tetrahydromethanopterin from coenzyme M and methyl-tetrahydromethanopterin. This is an energy-conserving, sodium-ion translocating step. The sequence is that of Tetrahydromethanopterin S-methyltransferase subunit D from Methanothermobacter marburgensis (strain ATCC BAA-927 / DSM 2133 / JCM 14651 / NBRC 100331 / OCM 82 / Marburg) (Methanobacterium thermoautotrophicum).